A 2179-amino-acid polypeptide reads, in one-letter code: Voltage-dependent L-type calcium channel subunit alpha-1D (2179 aa).

Disordered regions lie at residues Met1 to Ala21, Thr30 to Thr49, and Lys64 to Ser100. At Met1–Lys126 the chain is on the cytoplasmic side. A compositionally biased stretch (polar residues) spans Gly38–Thr49. Positions Gln82–Lys93 are enriched in basic residues. One copy of the I repeat lies at Asn113–Phe409. Residues Pro127–Ile145 traverse the membrane as a helical segment. At Tyr146–Lys163 the chain is on the extracellular side. Residues Val164–Tyr183 traverse the membrane as a helical segment. Residues Gly184–Asn195 are Cytoplasmic-facing. Residues Gly196–Leu214 traverse the membrane as a helical segment. The Extracellular segment spans residues Glu215–Asp235. Residues Val236–Val254 form a helical membrane-spanning segment. Topologically, residues Pro255–His273 are cytoplasmic. The chain crosses the membrane as a helical span at residues Ile274–Phe293. The Extracellular portion of the chain corresponds to Ile294–Trp381. Glu364 is a binding site for Ca(2+). Residues Pro382–Ser406 form a helical membrane-spanning segment. The Cytoplasmic segment spans residues Gly407 to Val543. A binding to the beta subunit region spans residues Gln429–Glu446. The disordered stretch occupies residues Asp449–Ser480. The span at Asn463–Val479 shows a compositional bias: polar residues. The stretch at Asn529–Leu775 is one II repeat. The helical transmembrane segment at Thr544 to Glu563 threads the bilayer. Over His564 to Ala578 the chain is Extracellular. A helical membrane pass occupies residues Asn579–Leu597. The Cytoplasmic portion of the chain corresponds to Gly598–Ser605. The chain crosses the membrane as a helical span at residues Leu606–Leu624. The Extracellular segment spans residues Val625–Gly634. A helical membrane pass occupies residues Val635–Trp653. The Cytoplasmic segment spans residues Thr654 to Ser672. Residues Leu673–Gly693 form a helical membrane-spanning segment. Over Gly694 to Ile747 the chain is Extracellular. A Ca(2+)-binding site is contributed by Glu725. A helical transmembrane segment spans residues Val748–Val772. Residues Ala771 to Lys810 adopt a coiled-coil conformation. Residues Asp773–His906 are Cytoplasmic-facing. The segment covering Lys786–Lys810 has biased composition (basic and acidic residues). The disordered stretch occupies residues Lys786–Glu870. A compositionally biased stretch (polar residues) spans Pro811 to Lys822. Acidic residues predominate over residues Val845–Glu858. An III repeat occupies Asn893–Phe1175. Residues Ile907 to Ala925 traverse the membrane as a helical segment. The Extracellular portion of the chain corresponds to Glu926–Tyr941. A helical transmembrane segment spans residues Phe942–Phe961. Topologically, residues Gly962–Asn973 are cytoplasmic. The helical transmembrane segment at Tyr974–Ile992 threads the bilayer. The Extracellular portion of the chain corresponds to Gln993–Ser998. A helical transmembrane segment spans residues Val999–Ala1018. The Cytoplasmic segment spans residues Lys1019–Asn1037. The helical transmembrane segment at Ile1038–Phe1057 threads the bilayer. The Extracellular segment spans residues Lys1058 to Glu1147. The segment at Arg1095–Asn1185 is dihydropyridine binding. A Ca(2+)-binding site is contributed by Glu1121. A helical transmembrane segment spans residues Ile1148–Val1168. The Cytoplasmic segment spans residues Gly1169–Ser1225. The IV repeat unit spans residues Asn1212 to Phe1487. A helical transmembrane segment spans residues Pro1226–Met1244. The Extracellular segment spans residues Gln1245 to Ile1259. The chain crosses the membrane as a helical span at residues Leu1260 to Phe1279. The Cytoplasmic portion of the chain corresponds to Lys1280–Ser1286. Residues Asp1287–Glu1308 form a helical membrane-spanning segment. Over Ala1309–Ile1333 the chain is Extracellular. The chain crosses the membrane as a helical span at residues Ser1334–Gly1353. At Glu1354–Tyr1372 the chain is on the cytoplasmic side. Residues Val1373–Phe1392 traverse the membrane as a helical segment. Topologically, residues Gly1393–Phe1459 are extracellular. Residues Leu1440 to Lys1506 are dihydropyridine binding. The segment at Glu1452–Ser1495 is phenylalkylamine binding. Residues Ala1460–Met1484 form a helical membrane-spanning segment. The Cytoplasmic segment spans residues Asp1485–Leu2179. 3 disordered regions span residues Leu1704–Lys1789, Phe1896–Phe1941, and Gly2135–Asp2171. Over residues Ser1764–Met1782 the composition is skewed to polar residues. Positions Ser2156–Asp2171 are enriched in acidic residues.

Belongs to the calcium channel alpha-1 subunit (TC 1.A.1.11) family. CACNA1D subfamily. As to quaternary structure, voltage-dependent calcium channels are multisubunit complexes, consisting of alpha-1, alpha-2, beta and delta subunits in a 1:1:1:1 ratio. The channel activity is directed by the pore-forming and voltage-sensitive alpha-1 subunit. In many cases, this subunit is sufficient to generate voltage-sensitive calcium channel activity. The auxiliary subunits beta and alpha-2/delta linked by a disulfide bridge regulate the channel activity. Interacts (via IQ domain) with CABP1 and CABP4 in a calcium independent manner. Interacts with RIMBP2. In terms of tissue distribution, expressed in the inner hair cells (IHC) of the cochlea.

The protein localises to the membrane. The catalysed reaction is Ca(2+)(in) = Ca(2+)(out). Voltage-sensitive calcium channels (VSCC) mediate the entry of calcium ions into excitable cells and are also involved in a variety of calcium-dependent processes, including muscle contraction, hormone or neurotransmitter release, gene expression, cell motility, cell division and cell death. The isoform alpha-1D gives rise to L-type calcium currents. Long-lasting (L-type) calcium channels belong to the 'high-voltage activated' (HVA) group. They are blocked by dihydropyridines (DHP), phenylalkylamines, and by benzothiazepines. This Mus musculus (Mouse) protein is Voltage-dependent L-type calcium channel subunit alpha-1D (Cacna1d).